The primary structure comprises 213 residues: Small ribosomal subunit protein uS4 (213 aa).

Positions 16–53 are disordered; sequence GTDLGLKSGVKPYDVKTKKSARPPGQHGVSRNKSSEYS. Polar residues predominate over residues 44–53; it reads VSRNKSSEYS. Residues 97 to 163 form the S4 RNA-binding domain; that stretch reads SRLDNVVYRM…EKSREQLRIK (67 aa).

The protein belongs to the universal ribosomal protein uS4 family. Part of the 30S ribosomal subunit. Contacts protein S5. The interaction surface between S4 and S5 is involved in control of translational fidelity.

Its function is as follows. One of the primary rRNA binding proteins, it binds directly to 16S rRNA where it nucleates assembly of the body of the 30S subunit. Functionally, with S5 and S12 plays an important role in translational accuracy. In Psychrobacter cryohalolentis (strain ATCC BAA-1226 / DSM 17306 / VKM B-2378 / K5), this protein is Small ribosomal subunit protein uS4.